The primary structure comprises 114 residues: Nucleoid-associated protein CKL_3826 (114 aa).

This sequence belongs to the YbaB/EbfC family. As to quaternary structure, homodimer.

It is found in the cytoplasm. The protein resides in the nucleoid. Binds to DNA and alters its conformation. May be involved in regulation of gene expression, nucleoid organization and DNA protection. The polypeptide is Nucleoid-associated protein CKL_3826 (Clostridium kluyveri (strain ATCC 8527 / DSM 555 / NBRC 12016 / NCIMB 10680 / K1)).